Reading from the N-terminus, the 259-residue chain is Thrombin-like enzyme gyroxin B1.7 (259 aa).

The N-terminal stretch at 1–18 is a signal peptide; sequence MVLIRVLANLLILQLSYA. Residues 19-259 constitute a propeptide that is removed on maturation; that stretch reads QKSSELVIGG…AGNTAVTCPP (241 aa). Residues 25–250 enclose the Peptidase S1 domain; it reads VIGGDECNIN…DTEWIQSIIA (226 aa). 5 disulfides stabilise this stretch: Cys31–Cys162, Cys49–Cys65, Cys141–Cys211, Cys173–Cys190, and Cys201–Cys226. His64 serves as the catalytic Charge relay system. A glycan (N-linked (GlcNAc...) asparagine) is linked at Asn102. The Charge relay system role is filled by Asp109. Ser205 acts as the Charge relay system in catalysis.

This sequence belongs to the peptidase S1 family. Snake venom subfamily. Monomer. Expressed by the venom gland.

It is found in the secreted. Functionally, thrombin-like snake venom serine protease. Displays a specificity similar to trypsin. Releases only fibrinopeptide A in the conversion of fibrinogen to fibrin. Shows coagulant, esterase and amidase activities. Reversibly increases the permeability of the blood brain barrier (BBB) in mice. Induces the barrel rotation syndrome in mice, which is manifested by gyroxin-like, rapid rolling motions. This syndrome may be due to its effect on BBB permeability, and certainly also to other actions affecting endogenous substrates present in the endothelium, nervous tissues or blood. This chain is Thrombin-like enzyme gyroxin B1.7, found in Crotalus durissus terrificus (South American rattlesnake).